Reading from the N-terminus, the 50-residue chain is Photosystem II reaction center protein M (50 aa).

Residues 6 to 26 (FGFVASLLFVGVPTIFLIGLF) form a helical membrane-spanning segment.

It belongs to the PsbM family. In terms of assembly, PSII is composed of 1 copy each of membrane proteins PsbA, PsbB, PsbC, PsbD, PsbE, PsbF, PsbH, PsbI, PsbJ, PsbK, PsbL, PsbM, PsbT, PsbX, PsbY, Psb30/Ycf12, peripheral proteins PsbO, CyanoQ (PsbQ), PsbU, PsbV and a large number of cofactors. It forms dimeric complexes.

The protein localises to the cellular thylakoid membrane. One of the components of the core complex of photosystem II (PSII). PSII is a light-driven water:plastoquinone oxidoreductase that uses light energy to abstract electrons from H(2)O, generating O(2) and a proton gradient subsequently used for ATP formation. It consists of a core antenna complex that captures photons, and an electron transfer chain that converts photonic excitation into a charge separation. This subunit is found at the monomer-monomer interface. The sequence is that of Photosystem II reaction center protein M from Prochlorococcus marinus (strain MIT 9215).